The following is a 256-amino-acid chain: Small ribosomal subunit protein eS1 (256 aa).

Residues 1–18 (MAVGKNKRLSKGKKGLKK) show a composition bias toward basic residues. Residues 1–20 (MAVGKNKRLSKGKKGLKKRT) are disordered. N-acetylalanine; partial is present on A2.

The protein belongs to the eukaryotic ribosomal protein eS1 family. As to quaternary structure, component of the small ribosomal subunit. Mature ribosomes consist of a small (40S) and a large (60S) subunit. The 40S subunit contains about 33 different proteins and 1 molecule of RNA (18S). The 60S subunit contains about 49 different proteins and 3 molecules of RNA (25S, 5.8S and 5S).

Its subcellular location is the cytoplasm. This is Small ribosomal subunit protein eS1 (rps1) from Talaromyces stipitatus (strain ATCC 10500 / CBS 375.48 / QM 6759 / NRRL 1006) (Penicillium stipitatum).